Reading from the N-terminus, the 337-residue chain is Biotin synthase (337 aa).

Positions 55–284 (YFKNTIELCS…KKTILLAGGK (230 aa)) constitute a Radical SAM core domain. Residues C73, C77, and C80 each contribute to the [4Fe-4S] cluster site. 3 residues coordinate [2Fe-2S] cluster: C117, C149, and C209.

The protein belongs to the radical SAM superfamily. Biotin synthase family. In terms of assembly, homodimer. The cofactor is [4Fe-4S] cluster. Requires [2Fe-2S] cluster as cofactor.

It carries out the reaction (4R,5S)-dethiobiotin + (sulfur carrier)-SH + 2 reduced [2Fe-2S]-[ferredoxin] + 2 S-adenosyl-L-methionine = (sulfur carrier)-H + biotin + 2 5'-deoxyadenosine + 2 L-methionine + 2 oxidized [2Fe-2S]-[ferredoxin]. It participates in cofactor biosynthesis; biotin biosynthesis; biotin from 7,8-diaminononanoate: step 2/2. Catalyzes the conversion of dethiobiotin (DTB) to biotin by the insertion of a sulfur atom into dethiobiotin via a radical-based mechanism. The polypeptide is Biotin synthase (Caldicellulosiruptor bescii (strain ATCC BAA-1888 / DSM 6725 / KCTC 15123 / Z-1320) (Anaerocellum thermophilum)).